The following is a 340-amino-acid chain: CMP-N-acetylneuraminate-beta-galactosamide-alpha-2,3-sialyltransferase 1 (340 aa).

The Cytoplasmic segment spans residues 1-13; the sequence is MVTLRKRTLKVLT. Residues 14 to 34 traverse the membrane as a helical; Signal-anchor for type II membrane protein segment; that stretch reads FLVLFIFLTSFFLNYSHTMVA. The Lumenal portion of the chain corresponds to 35–340; sequence TTWFPKQMVL…INKIRIFKGR (306 aa). Intrachain disulfides connect Cys-59/Cys-64, Cys-61/Cys-139, and Cys-142/Cys-281. N-linked (GlcNAc...) asparagine glycosylation is present at Asn-79. Substrate is bound at residue Gln-105. Asn-114 is a glycosylation site (N-linked (GlcNAc...) asparagine). Residues Asn-147 and Asn-170 each coordinate substrate. Asn-201 is a glycosylation site (N-linked (GlcNAc...) asparagine). Substrate contacts are provided by Tyr-230, Tyr-266, Gly-270, Gly-290, His-299, and His-316. Asn-323 carries N-linked (GlcNAc...) asparagine glycosylation.

It belongs to the glycosyltransferase 29 family. In terms of processing, the soluble form derives from the membrane form by proteolytic processing. Expressed in several tissues. Highest expression in lung, liver, skeletal muscle, kidney, pancreas, spleen and placenta.

The protein localises to the golgi apparatus. The protein resides in the golgi stack membrane. It localises to the trans-Golgi network membrane. It is found in the secreted. The enzyme catalyses a beta-D-galactosyl-(1-&gt;3)-N-acetyl-alpha-D-galactosaminyl derivative + CMP-N-acetyl-beta-neuraminate = an N-acetyl-alpha-neuraminyl-(2-&gt;3)-beta-D-galactosyl-(1-&gt;3)-N-acetyl-alpha-D-galactosaminyl derivative + CMP + H(+). It carries out the reaction a ganglioside GM1 + CMP-N-acetyl-beta-neuraminate = a ganglioside GD1a + CMP + H(+). It catalyses the reaction a ganglioside GM1 (d18:1(4E)) + CMP-N-acetyl-beta-neuraminate = a ganglioside GD1a (d18:1(4E)) + CMP + H(+). The catalysed reaction is ganglioside GM1 (d18:1(4E)/18:0) + CMP-N-acetyl-beta-neuraminate = ganglioside GD1a (18:1(4E)/18:0) + CMP + H(+). The enzyme catalyses a ganglioside GA1 + CMP-N-acetyl-beta-neuraminate = a ganglioside GM1b + CMP + H(+). It carries out the reaction a ganglioside GA1 (d18:1(4E)) + CMP-N-acetyl-beta-neuraminate = a ganglioside GM1b (d18:1(4E)) + CMP + H(+). It catalyses the reaction a ganglioside GD1b + CMP-N-acetyl-beta-neuraminate = a ganglioside GT1b + CMP + H(+). The catalysed reaction is a 3-O-[beta-D-galactosyl-(1-&gt;3)-N-acetyl-alpha-D-galactosaminyl]-L-threonyl-[protein] + CMP-N-acetyl-beta-neuraminate = a 3-O-[N-acetyl-alpha-neuraminyl-(2-&gt;3)-beta-D-galactosyl-(1-&gt;3)-N-acetyl-alpha-D-galactosaminyl]-L-threonyl-[protein] + CMP + H(+). The enzyme catalyses a 3-O-[beta-D-galactosyl-(1-&gt;3)-N-acetyl-alpha-D-galactosaminyl]-L-seryl-[protein] + CMP-N-acetyl-beta-neuraminate = 3-O-[N-acetyl-alpha-neuraminyl-(2-&gt;3)-beta-D-galactosyl-(1-&gt;3)-N-acetyl-alpha-D-galactosaminyl]-L-seryl-[protein] + CMP + H(+). The protein operates within protein modification; protein glycosylation. It functions in the pathway glycolipid biosynthesis. A beta-galactoside alpha2-&gt;3 sialyltransferase involved in terminal sialylation of glycoproteins and glycolipids. Catalyzes the transfer of sialic acid (N-acetyl-neuraminic acid; Neu5Ac) from the nucleotide sugar donor CMP-Neu5Ac onto acceptor Galbeta-(1-&gt;3)-GalNAc-terminated glycoconjugates through an alpha2-3 linkage. Adds sialic acid to the core 1 O-glycan, Galbeta-(1-&gt;3)-GalNAc-O-Ser/Thr, which is a major structure of mucin-type O-glycans. As part of a homeostatic mechanism that regulates CD8-positive T cell numbers, sialylates core 1 O-glycans of T cell glycoproteins, SPN/CD43 and PTPRC/CD45. Prevents premature apoptosis of thymic CD8-positive T cells prior to peripheral emigration, whereas in the secondary lymphoid organs controls the survival of CD8-positive memory T cells generated following a successful immune response. Transfers sialic acid to asialofetuin, presumably onto Galbeta-(1-&gt;3)-GalNAc-O-Ser. Sialylates GM1a, GA1 and GD1b gangliosides to form GD1a, GM1b and GT1b, respectively. The polypeptide is CMP-N-acetylneuraminate-beta-galactosamide-alpha-2,3-sialyltransferase 1 (Homo sapiens (Human)).